A 395-amino-acid polypeptide reads, in one-letter code: E3 ubiquitin-protein ligase RDUF1 (395 aa).

2 disordered regions span residues 1–22 (MMPN…TTTT) and 107–130 (PVIV…EGDG). Over residues 9–22 (TITPTTESTTTTTT) the composition is skewed to low complexity. Positions 121–130 (ERVENEEGDG) are enriched in basic and acidic residues. The segment at 215–256 (CAVCTEVFEAGIEGREMPCKHIFHGDCIVPWLSIRNSCPVCR) adopts an RING-type; atypical zinc-finger fold.

Expressed in root tips, leaf tips, junction of carpels and pedicels, stigma, anthers, pollen, vasculature of sepals and petals, immature seeds and embryos.

Its subcellular location is the cytoplasm. The protein localises to the cytosol. It localises to the nucleus. The catalysed reaction is S-ubiquitinyl-[E2 ubiquitin-conjugating enzyme]-L-cysteine + [acceptor protein]-L-lysine = [E2 ubiquitin-conjugating enzyme]-L-cysteine + N(6)-ubiquitinyl-[acceptor protein]-L-lysine.. It functions in the pathway protein modification; protein ubiquitination. Its function is as follows. E3 ubiquitin-protein ligase involved in the positive regulation of abscisic acid-dependent drought stress responses. Involved in the positive regulation of responses to salt and osmotic stresses during seed germination and early seedling development. Possesses E3 ubiquitin ligase activity in vitro. The chain is E3 ubiquitin-protein ligase RDUF1 from Arabidopsis thaliana (Mouse-ear cress).